A 439-amino-acid chain; its full sequence is Choline monooxygenase, chloroplastic (439 aa).

A chloroplast-targeting transit peptide spans 1-60 (MMAASASATTMLLKYPTTVCGIPNPSSNNNNDPSNNIVSIPQNTTNPTLKSRTPNKITTN). Over residues 24–41 (NPSSNNNNDPSNNIVSIP) the composition is skewed to low complexity. The interval 24–54 (NPSSNNNNDPSNNIVSIPQNTTNPTLKSRTP) is disordered. Over residues 42 to 54 (QNTTNPTLKSRTP) the composition is skewed to polar residues. The region spanning 120–227 (WQVAGISDQI…VAVWGPFVLI (108 aa)) is the Rieske domain. [2Fe-2S] cluster is bound by residues cysteine 162, histidine 164, cysteine 181, and histidine 184. Fe cation-binding residues include histidine 287 and histidine 292.

Homotrimer or homodimer. Requires [2Fe-2S] cluster as cofactor. It depends on Fe cation as a cofactor. Mg(2+) serves as cofactor. As to expression, expressed in leaves.

It is found in the plastid. It localises to the chloroplast stroma. It carries out the reaction choline + 2 reduced [2Fe-2S]-[ferredoxin] + O2 + 2 H(+) = betaine aldehyde hydrate + 2 oxidized [2Fe-2S]-[ferredoxin] + H2O. Its pathway is amine and polyamine biosynthesis; betaine biosynthesis via choline pathway; betaine aldehyde from choline (monooxygenase route): step 1/1. Catalyzes the first step of the osmoprotectant glycine betaine synthesis. This Spinacia oleracea (Spinach) protein is Choline monooxygenase, chloroplastic (CMO).